We begin with the raw amino-acid sequence, 394 residues long: Na(+)/H(+) antiporter NhaA (394 aa).

The next 11 helical transmembrane spans lie at 14–34, 59–79, 95–115, 125–145, 155–175, 177–197, 204–224, 258–278, 292–312, 328–348, and 362–382; these read AGGI…NSVF, LLMW…GMEV, IFPA…YWFI, GWAI…ALLS, FLLA…ALFF, NELS…LITM, GIIH…KSGV, WCAF…SLAG, ITLG…YLAV, VFAI…IAGL, and LSRL…YILL.

Belongs to the NhaA Na(+)/H(+) (TC 2.A.33) antiporter family.

The protein localises to the cell inner membrane. The catalysed reaction is Na(+)(in) + 2 H(+)(out) = Na(+)(out) + 2 H(+)(in). Its function is as follows. Na(+)/H(+) antiporter that extrudes sodium in exchange for external protons. In Haemophilus ducreyi (strain 35000HP / ATCC 700724), this protein is Na(+)/H(+) antiporter NhaA.